The sequence spans 222 residues: UPF0502 protein XAC4278 (222 aa).

This sequence belongs to the UPF0502 family.

This chain is UPF0502 protein XAC4278, found in Xanthomonas axonopodis pv. citri (strain 306).